The primary structure comprises 67 residues: Inosine/xanthosine triphosphatase (67 aa).

The protein belongs to the YjjX NTPase family. As to quaternary structure, homodimer. It depends on Mg(2+) as a cofactor. Mn(2+) serves as cofactor.

The catalysed reaction is XTP + H2O = XDP + phosphate + H(+). The enzyme catalyses ITP + H2O = IDP + phosphate + H(+). Functionally, phosphatase that hydrolyzes non-canonical purine nucleotides such as XTP and ITP to their respective diphosphate derivatives. Probably excludes non-canonical purines from DNA/RNA precursor pool, thus preventing their incorporation into DNA/RNA and avoiding chromosomal lesions. This chain is Inosine/xanthosine triphosphatase, found in Enterobacter cloacae.